The following is a 1732-amino-acid chain: Lys-gingipain W83 (1732 aa).

The signal sequence occupies residues 1 to 24; that stretch reads MRKLLLLIAASLLGVGLYAQSAKI. Positions 25–228 are excised as a propeptide; sequence KLDAPTTRTT…ETAYKQLFNR (204 aa). Positions 313, 337, 339, 341, and 343 each coordinate Ca(2+). The active-site Proton donor is His-444. Cys-477 functions as the Nucleophile in the catalytic mechanism. Residues Phe-482 and Glu-491 each contribute to the Ca(2+) site. The interval 965-988 is disordered; sequence DAPNGTPNPNPNPNPNPGTTLSES. Residues 970–980 show a composition bias toward pro residues; that stretch reads TPNPNPNPNPN. Residues Ser-988, Glu-990, Asp-1001, Asp-1003, Asp-1005, His-1007, Ser-1022, Gly-1024, Asn-1043, Asp-1146, Glu-1147, Asp-1433, Glu-1435, Asp-1446, Asp-1448, Asp-1450, Asn-1452, Ser-1470, Ile-1472, Asn-1490, and Asp-1595 each contribute to the Ca(2+) site.

Belongs to the peptidase C25 family. Post-translationally, proteolytically cleaved into a catalytic subunit and three adhesins. Arg-gingipain is involved in this post-translational processing.

It is found in the secreted. It carries out the reaction Endopeptidase with strict specificity for lysyl bonds.. Cysteine proteinase with a strong preference for substrates with Lys in the P1 position. Hydrolyzes bovine hemoglobin, bovine serum albumin, casein, human placental type I collagen and human IgA and IgG. Disrupts the functions of polymorphonuclear leukocytes. May act as a virulence factor in the development of peridontal disease. Involved in the coaggregation of P.gingivalis with other oral bacteria. Has hemolytic activity; this is mediated by the adhesin domains and does not require the catalytic domain. The sequence is that of Lys-gingipain W83 from Porphyromonas gingivalis (Bacteroides gingivalis).